We begin with the raw amino-acid sequence, 286 residues long: L-cysteine S-thiosulfotransferase subunit SoxA (286 aa).

The first 26 residues, 1-26, serve as a signal peptide directing secretion; that stretch reads MTVSKRFLAPVFAMVGGLVLAFSANA. A Cytochrome c domain is found at 80–166; that stretch reads LAVERGADIW…ALTSYIKHQS (87 aa). Heme is bound by residues C100, C103, H104, C138, C202, C205, and H206. Position 243 (R243) interacts with substrate. C247 is a heme binding site. C247 functions as the Cysteine persulfide intermediate in the catalytic mechanism.

The protein belongs to the SoxA family. Heterodimer of SoxA and SoxX. Heme serves as cofactor. Post-translationally, cysteine persulfide at Cys-247.

The protein resides in the periplasm. It carries out the reaction L-cysteinyl-[SoxY protein] + thiosulfate + 2 Fe(III)-[cytochrome c] = S-sulfosulfanyl-L-cysteinyl-[SoxY protein] + 2 Fe(II)-[cytochrome c] + 2 H(+). The catalysed reaction is S-sulfanyl-L-cysteinyl-[SoxY protein] + thiosulfate + 2 Fe(III)-[cytochrome c] = S-(2-sulfodisulfanyl)-L-cysteinyl-[SoxY protein] + 2 Fe(II)-[cytochrome c] + 2 H(+). Functionally, C-type diheme cytochrome, which is part of the SoxAX cytochrome complex involved in sulfur oxidation. The SoxAX complex catalyzes the formation of a heterodisulfide bond between the conserved cysteine residue on a sulfur carrier SoxYZ complex subunit SoxY and thiosulfate or other inorganic sulfur substrates. This leads to the liberation of two electrons, which may be transferred from the SoxAX complex to another cytochrome c that then channels them into the respiratory electron transport chain. Some electrons may be used for reductive CO(2) fixation. This Pseudaminobacter salicylatoxidans protein is L-cysteine S-thiosulfotransferase subunit SoxA.